Reading from the N-terminus, the 335-residue chain is Magnesium-protoporphyrin IX monomethyl ester [oxidative] cyclase (335 aa).

This sequence belongs to the AcsF family. It depends on Fe cation as a cofactor.

The protein localises to the plastid. Its subcellular location is the chloroplast. It carries out the reaction Mg-protoporphyrin IX 13-monomethyl ester + 3 NADPH + 3 O2 + 2 H(+) = 3,8-divinyl protochlorophyllide a + 3 NADP(+) + 5 H2O. It functions in the pathway porphyrin-containing compound metabolism; chlorophyll biosynthesis (light-independent). Its function is as follows. Catalyzes the formation of the isocyclic ring in chlorophyll biosynthesis. Mediates the cyclase reaction, which results in the formation of divinylprotochlorophyllide (Pchlide) characteristic of all chlorophylls from magnesium-protoporphyrin IX 13-monomethyl ester (MgPMME). In Cyanidioschyzon merolae (strain NIES-3377 / 10D) (Unicellular red alga), this protein is Magnesium-protoporphyrin IX monomethyl ester [oxidative] cyclase.